The primary structure comprises 461 residues: Bacterial E1-like protein BilD (461 aa).

Catalysis depends on cysteine 385, which acts as the Glycyl thioester intermediate.

Its function is as follows. Component of the Bil (bacterial ISG15-like) antiviral defense system, composed of BilA, BilB, BilC and BilD. The Bil system specifically conjugates a ubiquitin-like moiety (bilA) to the bacteriophage central tail fiber (CTF, or tip attachment protein J) via reactions involving E1 (bilD) and E2 (bilB). Modifies CTF of phage SECphi27 and SECphi4, which probably interferes with assembly of the phage tail. Also modifies T5 baseplate hub protein pb3 (gene D16), but not gp27 of phage T6 (Bil defends against T6). BilD (E1) catalyzes the first step in conjugation. Activates ubiquitin-like BilA by first adenylating its C-terminal glycine residue with ATP, and then conjugates it to the side chain of a cysteine residue in E1 (this protein), yielding a ubiquitin-E1 thioester and free AMP. Bil-encoding bacteria produce mostly defective phage SECphi27, many of which have phage assembly defects, including no tails. SECphi27 phage progeny produced in E.coli with the Bil system inject less DNA into naive host cells, maybe because the phage are less able to adsorb and inject their DNA into host cells. Functionally, expression of the Bil system in E.coli (strain MG1655) confers about 100-fold resistance to phage SECphi27, SECphi18, SECphi6, SECphi4 and T5, but not to SECphi17. When cells expressing the Bil system are infected by phage SECphi27 at low multiplicity of infection (0.03 MOI) the culture survives, at 3.0 MOI the culture collapses at the same time as cells without the Bil system. The protein is Bacterial E1-like protein BilD of Collimonas sp. (strain OK412).